We begin with the raw amino-acid sequence, 1064 residues long: Lysine-specific demethylase 4A (1064 aa).

An N-acetylalanine modification is found at Ala2. The region spanning 14–56 (IMTFYPTMEEFRNFSRYIAYIESQGAHRAGLAKVVPPKEWKPR) is the JmjN domain. A 2-oxoglutarate-binding site is contributed by Tyr132. One can recognise a JmjC domain in the interval 142 to 308 (EKHVDEWNIG…YGKQAVLCSC (167 aa)). Fe cation is bound by residues His188 and Glu190. 2 residues coordinate 2-oxoglutarate: Asn198 and Lys206. Cys234 and His240 together coordinate Zn(2+). Lys241 is a binding site for 2-oxoglutarate. His276 lines the Fe cation pocket. Cys306 and Cys308 together coordinate Zn(2+). The segment at 358–384 (ELPPRAGNEEECPEEDMEGVEDGEEGD) is disordered. A compositionally biased stretch (acidic residues) spans 366–382 (EEECPEEDMEGVEDGEE). A (Microbial infection) Glycyl lysine isopeptide (Lys-Gly) (interchain with G-Cter in SUMO) cross-link involves residue Lys471. Disordered regions lie at residues 501 to 537 (FSGS…RAQG) and 616 to 641 (SDDE…KPLS). The span at 509–532 (SSSLGSGSSRDSISSDSETSEPLS) shows a compositional bias: low complexity. Ser523 is subject to Phosphoserine. The interaction with NCOR1 stretch occupies residues 597–638 (RQPLSKLPRHHPLVLQECVSDDETSEQLTPEEEAEETEAWAK). Positions 616–634 (SDDETSEQLTPEEEAEETE) are enriched in acidic residues. The PHD-type 1 zinc-finger motif lies at 709 to 767 (MCFTSTGCSTDINLSTPYLEEDGTSILVSCKKCSVRVHASCYGVPPAKASEDWMCSRCS). The segment at 772 to 805 (EEDCCLCSLRGGALQRANDDRWVHVSCAVAILEA) adopts a C2HC pre-PHD-type zinc-finger fold. The segment at 828 to 885 (LKCIFCKKRRKRTAGCCVQCSHGRCPTAFHVSCAQAAGVMMQPDDWPFVVFITCFRHK) adopts a PHD-type 2 zinc-finger fold. Tudor domains lie at 897-954 (QSIT…CLQF) and 955-1011 (GPPA…EELP).

The protein belongs to the JHDM3 histone demethylase family. In terms of assembly, interacts with histone deacetylase proteins HDAC1, HDAC2 and HDAC3. Interacts with RB and NCOR1. Interacts with VRK1. Interacts with FBXO22; this interaction promotes KDM4A ubiquitination. As to quaternary structure, (Microbial infection) Interacts with HTLV-1 Tax protein. The cofactor is Fe(2+). (Microbial infection) SUMOylated by human herpesvirus 8 E3 SUMO-protein ligase K-bZIP/K8 at Lys-471; thereby modulating the chromatin binding and histone demethylase activity of KDM4A. Post-translationally, ubiquitinated by RNF8 and RNF168 following DNA damage, leading to its degradation. Degradation promotes accessibility of H4K20me2 mark for DNA repair protein TP53BP1, which is then recruited. Also ubiquitinated by the SCF(FBXO22) complex; leading to proteasomal degradation. In terms of tissue distribution, ubiquitous.

It is found in the nucleus. It carries out the reaction N(6),N(6),N(6)-trimethyl-L-lysyl(9)-[histone H3] + 2 2-oxoglutarate + 2 O2 = N(6)-methyl-L-lysyl(9)-[histone H3] + 2 formaldehyde + 2 succinate + 2 CO2. The enzyme catalyses N(6),N(6),N(6)-trimethyl-L-lysyl(36)-[histone H3] + 2 2-oxoglutarate + 2 O2 = N(6)-methyl-L-lysyl(36)-[histone H3] + 2 formaldehyde + 2 succinate + 2 CO2. Its activity is regulated as follows. Several specific inhibitors are being developed and tested. Histone demethylase that specifically demethylates 'Lys-9' and 'Lys-36' residues of histone H3, thereby playing a central role in histone code. Does not demethylate histone H3 'Lys-4', H3 'Lys-27' nor H4 'Lys-20'. Demethylates trimethylated H3 'Lys-9' and H3 'Lys-36' residue, while it has no activity on mono- and dimethylated residues. Demethylation of Lys residue generates formaldehyde and succinate. Participates in transcriptional repression of ASCL2 and E2F-responsive promoters via the recruitment of histone deacetylases and NCOR1, respectively. Functionally, crucial for muscle differentiation, promotes transcriptional activation of the Myog gene by directing the removal of repressive chromatin marks at its promoter. Lacks the N-terminal demethylase domain. This chain is Lysine-specific demethylase 4A (KDM4A), found in Homo sapiens (Human).